Reading from the N-terminus, the 121-residue chain is MEKSYVKFETPEDVSQKALDLVESAFRSGKIKKGTNEVIKSIERGESKLVVIAEDVNPPEVVYYLPSLCEDKKVPYVYVKKKADLGSKVGIASAASVSIVDYGKNEELYKSIVSAVEQLKK.

This sequence belongs to the eukaryotic ribosomal protein eL8 family. As to quaternary structure, part of the 50S ribosomal subunit. Probably part of the RNase P complex.

The protein localises to the cytoplasm. In terms of biological role, multifunctional RNA-binding protein that recognizes the K-turn motif in ribosomal RNA, the RNA component of RNase P, box H/ACA, box C/D and box C'/D' sRNAs. This chain is Large ribosomal subunit protein eL8, found in Thermoplasma volcanium (strain ATCC 51530 / DSM 4299 / JCM 9571 / NBRC 15438 / GSS1).